Consider the following 354-residue polypeptide: Selection and upkeep of intraepithelial T-cells protein 1 (354 aa).

The Ig-like V-type 1 domain occupies 23–141 (PSSEQFTVNS…EEAIAEVKVT (119 aa)). 2 disulfide bridges follow: C49/C123 and C163/C217. The Ig-like C1-type 2 domain maps to 161–233 (VECNSEGWFP…TGQEERTSIV (73 aa)). Helical transmembrane passes span 243-263 (SVWI…IMMP), 283-303 (LIGI…TITL), and 326-346 (MTVM…LVYF).

The protein belongs to the SKINT family. In terms of tissue distribution, expressed in the thymus and skin.

The protein resides in the membrane. Its function is as follows. May act by engaging a cell surface molecule on immature T-cells in the embryonic thymus. This Macaca fascicularis (Crab-eating macaque) protein is Selection and upkeep of intraepithelial T-cells protein 1 (SKINT1).